We begin with the raw amino-acid sequence, 430 residues long: GTPase Obg (430 aa).

Residues 1-158 (MFVDQVKISL…LEVTLELKLL (158 aa)) form the Obg domain. The interval 118 to 145 (RGGRGGRGNSRFATPRNPAPDFSENGEP) is disordered. Residues 159–329 (ADVGLVGFPS…LLYQIADKLE (171 aa)) enclose the OBG-type G domain. GTP is bound by residues 165-172 (GFPSVGKS), 190-194 (FTTIK), 212-215 (DLPG), 282-285 (NKMD), and 310-312 (STI). Residues serine 172 and threonine 192 each contribute to the Mg(2+) site. The region spanning 352-430 (KHTPSADKFT…ILGGEFEFVE (79 aa)) is the OCT domain.

Belongs to the TRAFAC class OBG-HflX-like GTPase superfamily. OBG GTPase family. Monomer. It depends on Mg(2+) as a cofactor.

The protein resides in the cytoplasm. Functionally, an essential GTPase which binds GTP, GDP and possibly (p)ppGpp with moderate affinity, with high nucleotide exchange rates and a fairly low GTP hydrolysis rate. Plays a role in control of the cell cycle, stress response, ribosome biogenesis and in those bacteria that undergo differentiation, in morphogenesis control. The chain is GTPase Obg from Staphylococcus epidermidis (strain ATCC 12228 / FDA PCI 1200).